A 298-amino-acid polypeptide reads, in one-letter code: MAFENIISAADKARILAEALPYIRRFSGSVVVIKYGGNAMTEPALKEGFARDVVLLKLVGIHPVIVHGGGPQINAMLEKVGKKGKFVQGMRVTDKEAMDIVEMVLGGHVNKEIVSMINTYGGHAVGVSGRDDHFIKAKKLLIDTPEQNGVDIGQVGTVESIDTGLVKGLIERGCIPVVAPVGVGEKGEAFNINADLVAGKLAEELNAEKLLMMTNIAGVMDKTGNLLTKLTPKRIDELIADGTLYGGMLPKIASAVEAAVNGVKATHIIDGRVPNALLLEIFTDAGIGSMILGGGEDA.

Substrate contacts are provided by residues 69–70 (GG), Arg91, and Asn191.

It belongs to the acetylglutamate kinase family. ArgB subfamily.

It localises to the cytoplasm. The catalysed reaction is N-acetyl-L-glutamate + ATP = N-acetyl-L-glutamyl 5-phosphate + ADP. It participates in amino-acid biosynthesis; L-arginine biosynthesis; N(2)-acetyl-L-ornithine from L-glutamate: step 2/4. In terms of biological role, catalyzes the ATP-dependent phosphorylation of N-acetyl-L-glutamate. This is Acetylglutamate kinase from Neisseria meningitidis serogroup C (strain 053442).